We begin with the raw amino-acid sequence, 201 residues long: MANNFSQLARKSKTNSPIEKVSKEQTGTPSLEIYKLGDDVLRENAKRISKVDNSIRNLAKDMLQSMYAAKGIGLAAPQIGIKKELLVIDVNFEDAAAEPLILINPEITDYGTTLNSYEEGCLSIPGVYLNVVRPSTIKLRFRDEMGRPRKMKADGLLARCIQHEMDHLNGVLFVDRVTSKEDLNKELIKEGFHQKDVIPIK.

The span at 1–17 (MANNFSQLARKSKTNSP) shows a compositional bias: polar residues. The segment at 1 to 24 (MANNFSQLARKSKTNSPIEKVSKE) is disordered. Fe cation is bound by residues Cys-121 and His-163. Residue Glu-164 is part of the active site. His-167 lines the Fe cation pocket.

It belongs to the polypeptide deformylase family. Fe(2+) serves as cofactor.

It carries out the reaction N-terminal N-formyl-L-methionyl-[peptide] + H2O = N-terminal L-methionyl-[peptide] + formate. In terms of biological role, removes the formyl group from the N-terminal Met of newly synthesized proteins. Requires at least a dipeptide for an efficient rate of reaction. N-terminal L-methionine is a prerequisite for activity but the enzyme has broad specificity at other positions. The protein is Peptide deformylase of Prochlorococcus marinus subsp. pastoris (strain CCMP1986 / NIES-2087 / MED4).